Consider the following 623-residue polypeptide: Chaperone protein HtpG (623 aa).

Residues 1 to 336 are a; substrate-binding; it reads MVSKQQTMGF…ASDLPLNISR (336 aa). Residues 337-550 form a b region; that stretch reads EILQDNKQVE…EQDMGLEMQR (214 aa). Residues 551 to 623 form a c region; the sequence is ILQAAGQQVP…NRVNRLLVSS (73 aa).

It belongs to the heat shock protein 90 family. As to quaternary structure, homodimer.

It is found in the cytoplasm. Molecular chaperone. Has ATPase activity. This chain is Chaperone protein HtpG, found in Legionella pneumophila (strain Paris).